The primary structure comprises 292 residues: ABC transporter ATP-binding protein YtrB (292 aa).

Residues 2 to 227 (IELRQLSKAI…YIKIQMAFDT (226 aa)) form the ABC transporter domain. 34 to 41 (GRNGSGKT) is an ATP binding site.

This sequence belongs to the ABC transporter superfamily. As to quaternary structure, the complex is composed of 2 ATP-binding proteins (YtrB and YtrE), 2 transmembrane proteins (YtrC and YtrD) and a solute-binding protein (YtrF).

The protein resides in the cell membrane. Part of the ABC transporter complex YtrBCDEF that plays a role in acetoin utilization during stationary phase and sporulation. This chain is ABC transporter ATP-binding protein YtrB (ytrB), found in Bacillus subtilis (strain 168).